The sequence spans 367 residues: Phosphoribosylaminoimidazole-succinocarboxamide synthase (367 aa).

This sequence belongs to the SAICAR synthetase family.

It catalyses the reaction 5-amino-1-(5-phospho-D-ribosyl)imidazole-4-carboxylate + L-aspartate + ATP = (2S)-2-[5-amino-1-(5-phospho-beta-D-ribosyl)imidazole-4-carboxamido]succinate + ADP + phosphate + 2 H(+). Its pathway is purine metabolism; IMP biosynthesis via de novo pathway; 5-amino-1-(5-phospho-D-ribosyl)imidazole-4-carboxamide from 5-amino-1-(5-phospho-D-ribosyl)imidazole-4-carboxylate: step 1/2. The sequence is that of Phosphoribosylaminoimidazole-succinocarboxamide synthase from Shewanella sp. (strain ANA-3).